The following is a 389-amino-acid chain: Succinate--CoA ligase [ADP-forming] subunit beta (389 aa).

An ATP-grasp domain is found at 9-236 (RDMFEAHGVP…KDSADPLEAK (228 aa)). ATP is bound by residues lysine 45, 52–54 (GRG), alanine 94, and glutamate 99. Residues asparagine 191 and aspartate 205 each coordinate Mg(2+). Residues asparagine 256 and 318 to 320 (GIT) contribute to the substrate site.

Belongs to the succinate/malate CoA ligase beta subunit family. In terms of assembly, heterotetramer of two alpha and two beta subunits. Requires Mg(2+) as cofactor.

It carries out the reaction succinate + ATP + CoA = succinyl-CoA + ADP + phosphate. It catalyses the reaction GTP + succinate + CoA = succinyl-CoA + GDP + phosphate. It functions in the pathway carbohydrate metabolism; tricarboxylic acid cycle; succinate from succinyl-CoA (ligase route): step 1/1. In terms of biological role, succinyl-CoA synthetase functions in the citric acid cycle (TCA), coupling the hydrolysis of succinyl-CoA to the synthesis of either ATP or GTP and thus represents the only step of substrate-level phosphorylation in the TCA. The beta subunit provides nucleotide specificity of the enzyme and binds the substrate succinate, while the binding sites for coenzyme A and phosphate are found in the alpha subunit. The polypeptide is Succinate--CoA ligase [ADP-forming] subunit beta (Renibacterium salmoninarum (strain ATCC 33209 / DSM 20767 / JCM 11484 / NBRC 15589 / NCIMB 2235)).